The following is a 97-amino-acid chain: MVKLNLSNLQHFAHKKGGGSTSNGRDSQAKRLGAKAADGQTVSGGSILYRQRGTHIYPGVNVGRGGDDTLFAKVEGVVRFERKGRDKKQVSVYPIAK.

Positions 1-10 (MVKLNLSNLQ) are enriched in polar residues. Positions 1 to 12 (MVKLNLSNLQHF) are excised as a propeptide. The interval 1–38 (MVKLNLSNLQHFAHKKGGGSTSNGRDSQAKRLGAKAAD) is disordered.

This sequence belongs to the bacterial ribosomal protein bL27 family. In terms of processing, the N-terminus is cleaved by ribosomal processing cysteine protease Prp.

This chain is Large ribosomal subunit protein bL27, found in Streptococcus equi subsp. zooepidemicus (strain H70).